The primary structure comprises 142 residues: VapC ribonuclease R02377 (142 aa).

One can recognise a PINc domain in the interval 3–140; the sequence is FVDGSVIVAI…YKGNDFSQTD (138 aa). The Mg(2+) site is built by Asp-5 and Asp-115.

This sequence belongs to the PINc/VapC protein family. Mg(2+) is required as a cofactor.

Its function is as follows. Toxic component of a type II toxin-antitoxin (TA) system. An RNase. The polypeptide is VapC ribonuclease R02377 (Rhizobium meliloti (strain 1021) (Ensifer meliloti)).